We begin with the raw amino-acid sequence, 351 residues long: MTIAVGRAPQRGWFDILDDWLKRDRFVFVGWSGILLFPTAYLAIGGWLTGTTFVTSWYTHGIASSYLEGCNFLTAAVSTPADAMGHSLLLLWGPEAQGDFVRWCQLGGLWAFVALHGAFALIGFMLRQFEIARLVGIRPYNAIAFSGPIAVFVSVFLMYPLGQSSWFFAPSFGVAAIFRFLLFLQGFHNWTLNPFHMMGVAGILGGALLCAIHGATVENTLFEDGEQANTFKAFEPTQEEETYSMVTANRFWSQIFGIAFSNKRWLHFFMLFVPVMGLWTSSIGIIGLALNLRAYDFVSQEIRAAEDPEFETFYTKNILLNEGLRAWMAPADQPHENFVFPEEVLPRGNAL.

Residues 39 to 59 (TAYLAIGGWLTGTTFVTSWYT) traverse the membrane as a helical segment. His-116 provides a ligand contact to chlorophyll a. The chain crosses the membrane as a helical span at residues 123 to 139 (GFMLRQFEIARLVGIRP). Pheophytin a is bound by residues Gln-128 and Asn-141. A helical membrane pass occupies residues 151–164 (VFVSVFLMYPLGQS). His-196 lines the chlorophyll a pocket. A helical membrane pass occupies residues 206 to 226 (GALLCAIHGATVENTLFEDGE). Positions 213 and 260 each coordinate a plastoquinone. His-213 provides a ligand contact to Fe cation. Residue His-267 participates in Fe cation binding. Residues 277 to 293 (GLWTSSIGIIGLALNLR) traverse the membrane as a helical segment.

Belongs to the reaction center PufL/M/PsbA/D family. PSII is composed of 1 copy each of membrane proteins PsbA, PsbB, PsbC, PsbD, PsbE, PsbF, PsbH, PsbI, PsbJ, PsbK, PsbL, PsbM, PsbT, PsbX, PsbY, PsbZ, Psb30/Ycf12, peripheral proteins PsbO, CyanoQ (PsbQ), PsbU, PsbV and a large number of cofactors. It forms dimeric complexes. Requires The D1/D2 heterodimer binds P680, chlorophylls that are the primary electron donor of PSII, and subsequent electron acceptors. It shares a non-heme iron and each subunit binds pheophytin, quinone, additional chlorophylls, carotenoids and lipids. There is also a Cl(-1) ion associated with D1 and D2, which is required for oxygen evolution. The PSII complex binds additional chlorophylls, carotenoids and specific lipids. as cofactor.

The protein resides in the cellular thylakoid membrane. The enzyme catalyses 2 a plastoquinone + 4 hnu + 2 H2O = 2 a plastoquinol + O2. Its function is as follows. Photosystem II (PSII) is a light-driven water:plastoquinone oxidoreductase that uses light energy to abstract electrons from H(2)O, generating O(2) and a proton gradient subsequently used for ATP formation. It consists of a core antenna complex that captures photons, and an electron transfer chain that converts photonic excitation into a charge separation. The D1/D2 (PsbA/PsbD) reaction center heterodimer binds P680, the primary electron donor of PSII as well as several subsequent electron acceptors. D2 is needed for assembly of a stable PSII complex. This is Photosystem II D2 protein from Parasynechococcus marenigrum (strain WH8102).